Consider the following 359-residue polypeptide: MPNPSSTSSPYPLPEEIRNLLADVETFVADILKGENLSKKAKEKRESLIKKIKDVKSIYLQEFRDKGDAEDGEEYDDPFAGPPDTISLASERYDKDDEATSDGAQFPPIAAQDLPFVLKAGYLEKRRKDHSFLGFEWQKRWCALSKTVFYYYGSDKDKQQKGEFAIDGYSVRMNNALRKDGKKDCCFEISAPDKRIYQFTAASPKDAEEWVQQLKFVLQDMESDIIPEDYDERGELYDDVDHPLPISNLPTSSQPIDDEIYEELPEEEEDSAPVKVVEQRKMGQDSVHHTSGDKSTDYANFYQGLWDCTGAFSDELSFKRGDVIYILSKEYNRYGWWVGEMKGAIGLVPKAYIMEMYDI.

A phosphoserine mark is found at Ser-5, Ser-6, and Ser-9. Positions 67 to 88 (GDAEDGEEYDDPFAGPPDTISL) are disordered. At Tyr-75 the chain carries Phosphotyrosine. 2 positions are modified to phosphoserine: Ser-87 and Ser-90. The region spanning 116–219 (FVLKAGYLEK…WVQQLKFVLQ (104 aa)) is the PH domain. Phosphotyrosine is present on residues Tyr-151 and Tyr-197. Ser-223 is subject to Phosphoserine. Tyr-261 is subject to Phosphotyrosine. Phosphoserine is present on Ser-286. The region spanning 297–358 (DYANFYQGLW…PKAYIMEMYD (62 aa)) is the SH3 domain.

This sequence belongs to the SKAP family. In terms of assembly, interacts with FYB1, which is required for SKAP2 protein stability. Interacts with PTPNS1. Part of a complex consisting of SKAP2, FYB1 and PTPNS1. Part of a complex consisting of SKAP2, FYB1 and LILRB3. Interacts with LAT, GRB2, PTK2B, and PRAM1. May interact with actin. May interact with FYN, HCK and LYN. Interacts with FASLG.

The protein localises to the cytoplasm. In terms of biological role, may be involved in B-cell and macrophage adhesion processes. In B-cells, may act by coupling the B-cell receptor (BCR) to integrin activation. May play a role in src signaling pathway. The polypeptide is Src kinase-associated phosphoprotein 2 (SKAP2) (Pongo abelii (Sumatran orangutan)).